The following is a 524-amino-acid chain: Cytochrome P450 4F12 (524 aa).

Transmembrane regions (helical) follow at residues 19-39 (WLLL…AWTY) and 87-107 (GFTV…PDTI). Cys468 lines the heme pocket.

This sequence belongs to the cytochrome P450 family. The cofactor is heme. Expressed in small intestine, liver, colon and heart.

The protein resides in the endoplasmic reticulum membrane. Its subcellular location is the microsome membrane. It catalyses the reaction an organic molecule + reduced [NADPH--hemoprotein reductase] + O2 = an alcohol + oxidized [NADPH--hemoprotein reductase] + H2O + H(+). The enzyme catalyses (5Z,8Z,11Z,14Z)-eicosatetraenoate + reduced [NADPH--hemoprotein reductase] + O2 = 18-hydroxy-(5Z,8Z,11Z,14Z)-eicosatetraenoate + oxidized [NADPH--hemoprotein reductase] + H2O + H(+). The catalysed reaction is (7Z,10Z,13Z,16Z,19Z)-docosapentaenoate + reduced [NADPH--hemoprotein reductase] + O2 = 10,11-epoxy-(7Z,13Z,16Z,19Z)-docosatetraenoate + oxidized [NADPH--hemoprotein reductase] + H2O + H(+). It carries out the reaction (7Z,10Z,13Z,16Z,19Z)-docosapentaenoate + reduced [NADPH--hemoprotein reductase] + O2 = 13,14-epoxy-(7Z,10Z,16Z,19Z)-docosatetraenoate + oxidized [NADPH--hemoprotein reductase] + H2O + H(+). It catalyses the reaction (7Z,10Z,13Z,16Z,19Z)-docosapentaenoate + reduced [NADPH--hemoprotein reductase] + O2 = 16,17-epoxy-(7Z,10Z,13Z,19Z)-docosatetraenoate + oxidized [NADPH--hemoprotein reductase] + H2O + H(+). The enzyme catalyses (7Z,10Z,13Z,16Z,19Z)-docosapentaenoate + reduced [NADPH--hemoprotein reductase] + O2 = 19,20-epoxy-(7Z,10Z,13Z,16Z)-docosatetraenoate + oxidized [NADPH--hemoprotein reductase] + H2O + H(+). The catalysed reaction is (4Z,7Z,10Z,13Z,16Z,19Z)-docosahexaenoate + reduced [NADPH--hemoprotein reductase] + O2 = 10,11-epoxy-(4Z,7Z,13Z,16Z,19Z)-docosapentaenoate + oxidized [NADPH--hemoprotein reductase] + H2O + H(+). It carries out the reaction (4Z,7Z,10Z,13Z,16Z,19Z)-docosahexaenoate + reduced [NADPH--hemoprotein reductase] + O2 = 13,14-epoxy-(4Z,7Z,10Z,16Z,19Z)-docosapentaenoate + oxidized [NADPH--hemoprotein reductase] + H2O + H(+). It catalyses the reaction (4Z,7Z,10Z,13Z,16Z,19Z)-docosahexaenoate + reduced [NADPH--hemoprotein reductase] + O2 = 16,17-epoxy-(4Z,7Z,10Z,13Z,19Z)-docosapentaenoate + oxidized [NADPH--hemoprotein reductase] + H2O + H(+). The enzyme catalyses (4Z,7Z,10Z,13Z,16Z,19Z)-docosahexaenoate + reduced [NADPH--hemoprotein reductase] + O2 = 19,20-epoxy-(4Z,7Z,10Z,13Z,16Z)-docosapentaenoate + oxidized [NADPH--hemoprotein reductase] + H2O + H(+). It participates in lipid metabolism; arachidonate metabolism. A cytochrome P450 monooxygenase involved in the metabolism of endogenous polyunsaturated fatty acids (PUFAs). Mechanistically, uses molecular oxygen inserting one oxygen atom into a substrate, and reducing the second into a water molecule, with two electrons provided by NADPH via cytochrome P450 reductase (CPR; NADPH-ferrihemoprotein reductase). Catalyzes the hydroxylation of carbon hydrogen bonds, with preference for omega-2 position. Metabolizes (5Z,8Z,11Z,14Z)-eicosatetraenoic acid (arachidonate) toward 18-hydroxy arachidonate. Catalyzes the epoxidation of double bonds of PUFAs such as docosapentaenoic and docosahexaenoic acids. Has low omega-hydroxylase activity toward leukotriene B4 and arachidonate. Involved in the metabolism of xenobiotics. Catalyzes the hydroxylation of the antihistamine drug ebastine. This is Cytochrome P450 4F12 from Homo sapiens (Human).